The following is a 54-amino-acid chain: Rubredoxin (54 aa).

The Rubredoxin-like domain occupies 1-54 (MKKYQCIVCGWIYDEAEGWPQDGIAPGTKWEDIPDDWTCPDCGVSKVDFEMIEV). Fe cation-binding residues include Cys6, Cys9, Cys39, and Cys42.

Belongs to the rubredoxin family. It depends on Fe(3+) as a cofactor.

It is found in the cytoplasm. Its pathway is hydrocarbon metabolism; alkane degradation. Functionally, involved in the hydrocarbon hydroxylating system, which transfers electrons from NADH to rubredoxin reductase and then through rubredoxin to alkane 1 monooxygenase. This Acinetobacter baylyi (strain ATCC 33305 / BD413 / ADP1) protein is Rubredoxin (rubA).